The chain runs to 469 residues: Glutamate--tRNA ligase (469 aa).

The 'HIGH' region signature appears at 9–19; the sequence is PSPTGFLHVGG. The Zn(2+) site is built by Cys-98, Cys-100, Cys-125, and Asp-127. The short motif at 236 to 240 is the 'KMSKS' region element; the sequence is KLSKR. Residue Lys-239 participates in ATP binding.

The protein belongs to the class-I aminoacyl-tRNA synthetase family. Glutamate--tRNA ligase type 1 subfamily. In terms of assembly, monomer. It depends on Zn(2+) as a cofactor.

The protein localises to the cytoplasm. The catalysed reaction is tRNA(Glu) + L-glutamate + ATP = L-glutamyl-tRNA(Glu) + AMP + diphosphate. Its function is as follows. Catalyzes the attachment of glutamate to tRNA(Glu) in a two-step reaction: glutamate is first activated by ATP to form Glu-AMP and then transferred to the acceptor end of tRNA(Glu). The sequence is that of Glutamate--tRNA ligase from Shewanella putrefaciens (strain CN-32 / ATCC BAA-453).